The sequence spans 103 residues: MAAKIRQNDEVIVLAGKDKNKRGKVTKVLPNGKVIVEGINLITKHEKPVPALGKAGGLVKKEAAIDVSNVAIFNPTTNKADRVGFRFEDNKKVRFFKSNNEII.

The protein belongs to the universal ribosomal protein uL24 family. In terms of assembly, part of the 50S ribosomal subunit.

One of two assembly initiator proteins, it binds directly to the 5'-end of the 23S rRNA, where it nucleates assembly of the 50S subunit. Its function is as follows. One of the proteins that surrounds the polypeptide exit tunnel on the outside of the subunit. The chain is Large ribosomal subunit protein uL24 from Haemophilus ducreyi (strain 35000HP / ATCC 700724).